We begin with the raw amino-acid sequence, 436 residues long: Hydrogenobyrinate a,c-diamide synthase (436 aa).

The GATase cobBQ-type domain occupies arginine 244 to alanine 435. Cysteine 327 acts as the Nucleophile in catalysis.

This sequence belongs to the CobB/CbiA family. It depends on Mg(2+) as a cofactor.

The catalysed reaction is hydrogenobyrinate + 2 L-glutamine + 2 ATP + 2 H2O = hydrogenobyrinate a,c-diamide + 2 L-glutamate + 2 ADP + 2 phosphate + 2 H(+). Its pathway is cofactor biosynthesis; adenosylcobalamin biosynthesis; cob(II)yrinate a,c-diamide from precorrin-2 (aerobic route): step 9/10. In terms of biological role, catalyzes the ATP-dependent amidation of the two carboxylate groups at positions a and c of hydrogenobyrinate, using either L-glutamine or ammonia as the nitrogen source. This Brucella ovis (strain ATCC 25840 / 63/290 / NCTC 10512) protein is Hydrogenobyrinate a,c-diamide synthase.